A 67-amino-acid polypeptide reads, in one-letter code: Conotoxin TsMMSK-011 (67 aa).

Residues Met1–Pro22 form the signal peptide. Residues Met23–Val50 constitute a propeptide that is removed on maturation. 3 disulfide bridges follow: Cys53-Cys65, Cys54-Cys61, and Cys58-Cys64. At Pro63 the chain carries 4-hydroxyproline.

This sequence belongs to the conotoxin M superfamily. In terms of tissue distribution, expressed by the venom duct.

It is found in the secreted. This chain is Conotoxin TsMMSK-011, found in Conus tessulatus (Tessellate cone).